The primary structure comprises 254 residues: Proteasome subunit alpha (254 aa).

Positions 232-254 (PEVDSSESSNEAEAGAEKGSGES) are disordered.

This sequence belongs to the peptidase T1A family. As to quaternary structure, the 20S proteasome core is composed of 14 alpha and 14 beta subunits that assemble into four stacked heptameric rings, resulting in a barrel-shaped structure. The two inner rings, each composed of seven catalytic beta subunits, are sandwiched by two outer rings, each composed of seven alpha subunits. The catalytic chamber with the active sites is on the inside of the barrel. Has a gated structure, the ends of the cylinder being occluded by the N-termini of the alpha-subunits. Is capped by the proteasome-associated ATPase, ARC.

It localises to the cytoplasm. The protein operates within protein degradation; proteasomal Pup-dependent pathway. Its activity is regulated as follows. The formation of the proteasomal ATPase ARC-20S proteasome complex, likely via the docking of the C-termini of ARC into the intersubunit pockets in the alpha-rings, may trigger opening of the gate for substrate entry. Interconversion between the open-gate and close-gate conformations leads to a dynamic regulation of the 20S proteasome proteolysis activity. Its function is as follows. Component of the proteasome core, a large protease complex with broad specificity involved in protein degradation. This is Proteasome subunit alpha from Mycolicibacterium vanbaalenii (strain DSM 7251 / JCM 13017 / BCRC 16820 / KCTC 9966 / NRRL B-24157 / PYR-1) (Mycobacterium vanbaalenii).